The sequence spans 33 residues: Cyanophlyctin-beta (33 aa).

Cysteines 27 and 33 form a disulfide.

Expressed by the skin glands.

The protein localises to the secreted. In terms of biological role, antimicrobial peptide active against E.coli (MIC=5 uM), K.pneumoniae (MIC=10 uM), B.cereus (MIC=7 uM) and S.aureus (MIC=12 uM). Has very little hemolytic activity. This is Cyanophlyctin-beta from Euphlyctis cyanophlyctis (Skittering frog).